A 438-amino-acid polypeptide reads, in one-letter code: Fibrinogen gamma chain (438 aa).

The first 25 residues, 1–25, serve as a signal peptide directing secretion; sequence MTRLPKQGLLLLQSLALLSSAFGNI. The N-linked (GlcNAc...) asparagine glycan is linked to Asn76. Residues 167-414 form the Fibrinogen C-terminal domain; the sequence is QIQEFTGKDC…SVTMKIMPLN (248 aa). A disulfide bridge links Cys176 with Cys205. 3 residues coordinate Ca(2+): Asp341, Asp343, and Gly347. The cysteines at positions 349 and 362 are disulfide-linked.

In terms of assembly, heterohexamer; disulfide linked. Contains 2 sets of 3 non-identical chains (alpha, beta and gamma). The 2 heterotrimers are in head to head conformation with the N-termini in a small central domain. Conversion of fibrinogen to fibrin is triggered by thrombin, which cleaves fibrinopeptides A and B from alpha and beta chains, and thus exposes the N-terminal polymerization sites responsible for the formation of the soft clot. The soft clot is converted into the hard clot by factor XIIIA which catalyzes the epsilon-(gamma-glutamyl)lysine cross-linking between gamma chains (stronger) and between alpha chains (weaker) of different monomers.

It localises to the secreted. In terms of biological role, together with fibrinogen alpha (FGA) and fibrinogen beta (FGB), polymerizes to form an insoluble fibrin matrix. Has a major function in hemostasis as one of the primary components of blood clots. This chain is Fibrinogen gamma chain (fgg), found in Xenopus laevis (African clawed frog).